Here is a 549-residue protein sequence, read N- to C-terminus: MPTGCEFPMIKTFENALTAADFESTVELTNFPAVFRGCASVWDAYSKWNPFNSGLDYLEERAGSVEVEAMLSRTAPVFNGDIRSHERVSLPFSDFIRFCKQHMRGKGNGSGVDAKSADLNPMCEDYRPGQIYLAQFPILNDEKEEKVLLKILRQDIQTPTFLDAKSLSSINFWMNSAEARSSTHYDPHHNLLCVVSGRKKVVLWPPSASPSLYPMPIYGEASNHSSVGLENPNLSDYPRAEHSLKQSQEITLNAGDAVFIPEGWFHQVDSDELTVAVNFWWQSNYMSNMPEHMDSYYLRRITRSLLVSKPSSTDLRHLSEHIDQSRIEMAEGGNDNIGNESIKKGLSTLHEKASLHDLDPSASQALHDLISLVHDHVNAVDTSKGLQHTSPSCSEGGEKSKFLVNAMSCLEDDRVAHLLWNLEASRLRDVLLAMALELSYLKLLVKMEIFVLVLHKIFETLEALILHMLSPIAAEVLTQKFDEIDQQTGEEDRTQFFREFYSAFDDEAAAMDIILSRKEAFAFQVCSLASLCRLRTYHKLKGEKFSASY.

Residues 125–296 (DYRPGQIYLA…SNMPEHMDSY (172 aa)) enclose the JmjC domain. Histidine 184, aspartate 186, and histidine 266 together coordinate Fe cation.

This sequence belongs to the JARID1 histone demethylase family. Fe(2+) serves as cofactor. As to expression, mostly expressed in leaves and inflorescences, and, to a lower extent, in roots, siliques and stems.

The protein localises to the nucleus. Its function is as follows. May function as histone H3 lysine demethylase and be involved in regulation of gene expression. This is Lysine-specific demethylase JMJ31 from Arabidopsis thaliana (Mouse-ear cress).